The sequence spans 493 residues: Leucine-rich repeat-containing protein 14 (493 aa).

Residues 111–146 (KHTLRVLDMTGLLDDGVEQDPGTMSMWDCTAAVART) form an LRR 1; degenerate repeat. Residues 194–218 (RLCCRDLRAEDLPMRNTVALLQLLD) form an LRR 2; degenerate repeat. One copy of the LRR 3; degenerate repeat lies at 219–246 (AGCLRRVDLRFNNLGLRGLSVIIPHVAR). One copy of the LRR 4; degenerate repeat lies at 247-282 (FQHLASLRLHYVHGDSRQPSVDGEDNFRYFLAQMGR). 5 LRR repeats span residues 283 to 307 (FTCLRELSMGSSLLSGRLDQLLSTL), 308 to 339 (QSPLESLELAFCALLPEDLRFLARSSHAVHLK), 340 to 360 (KLDLSGNDLSGSQLEPFQGLL), 364 to 391 (AATLLHLELTECQLADTQLLATLPVLTR), and 392 to 416 (CASLRYLGLYGNPLSVAGLRELLRD).

It belongs to the PRAME family. LRRC14 subfamily. In terms of assembly, interacts with IKBKB; disrupts IKBKB-IKBKG interaction preventing I-kappa-B-kinase (IKK) core complex formation and leading to a decrease of IKBKB phosphorylation and NF-kappaB activation. Interacts with CHUK.

It localises to the cytoplasm. Functionally, negatively regulates Toll-like receptor-mediated NF-kappa-B signaling by disrupting IKK core complex formation through interaction with IKBKB. The sequence is that of Leucine-rich repeat-containing protein 14 from Bos taurus (Bovine).